The primary structure comprises 177 residues: Probable adenylyl-sulfate kinase (177 aa).

12 to 19 (GLSGAGKT) is a binding site for ATP. S86 (phosphoserine intermediate) is an active-site residue.

This sequence belongs to the APS kinase family.

It catalyses the reaction adenosine 5'-phosphosulfate + ATP = 3'-phosphoadenylyl sulfate + ADP + H(+). It participates in sulfur metabolism; hydrogen sulfide biosynthesis; sulfite from sulfate: step 2/3. Functionally, catalyzes the synthesis of activated sulfate. The polypeptide is Probable adenylyl-sulfate kinase (cysC) (Synechocystis sp. (strain ATCC 27184 / PCC 6803 / Kazusa)).